Reading from the N-terminus, the 393-residue chain is Bifunctional enzyme IspD/IspF (393 aa).

Positions Met1–Ile234 are 2-C-methyl-D-erythritol 4-phosphate cytidylyltransferase. Residues Arg235–Ala393 are 2-C-methyl-D-erythritol 2,4-cyclodiphosphate synthase. The a divalent metal cation site is built by Asp241 and His243. 4-CDP-2-C-methyl-D-erythritol 2-phosphate is bound by residues Asp241 to His243 and His267 to Ser268. His275 contacts a divalent metal cation. Residues Asp289–Gly291, Thr365–Glu368, Phe372, and Arg375 each bind 4-CDP-2-C-methyl-D-erythritol 2-phosphate.

This sequence in the N-terminal section; belongs to the IspD/TarI cytidylyltransferase family. IspD subfamily. In the C-terminal section; belongs to the IspF family. A divalent metal cation is required as a cofactor.

The catalysed reaction is 2-C-methyl-D-erythritol 4-phosphate + CTP + H(+) = 4-CDP-2-C-methyl-D-erythritol + diphosphate. It catalyses the reaction 4-CDP-2-C-methyl-D-erythritol 2-phosphate = 2-C-methyl-D-erythritol 2,4-cyclic diphosphate + CMP. Its pathway is isoprenoid biosynthesis; isopentenyl diphosphate biosynthesis via DXP pathway; isopentenyl diphosphate from 1-deoxy-D-xylulose 5-phosphate: step 2/6. It participates in isoprenoid biosynthesis; isopentenyl diphosphate biosynthesis via DXP pathway; isopentenyl diphosphate from 1-deoxy-D-xylulose 5-phosphate: step 4/6. Bifunctional enzyme that catalyzes the formation of 4-diphosphocytidyl-2-C-methyl-D-erythritol from CTP and 2-C-methyl-D-erythritol 4-phosphate (MEP) (IspD), and catalyzes the conversion of 4-diphosphocytidyl-2-C-methyl-D-erythritol 2-phosphate (CDP-ME2P) to 2-C-methyl-D-erythritol 2,4-cyclodiphosphate (ME-CPP) with a corresponding release of cytidine 5-monophosphate (CMP) (IspF). The sequence is that of Bifunctional enzyme IspD/IspF from Bradyrhizobium sp. (strain BTAi1 / ATCC BAA-1182).